The sequence spans 186 residues: Protein FAM9B (186 aa).

The segment at 1–93 (MAAWGKKHAG…KHALRKKQLK (93 aa)) is disordered. Basic and acidic residues-rich tracts occupy residues 10-27 (GKDP…FTET) and 34-58 (DEHG…KPED). A compositionally biased stretch (basic residues) spans 66–93 (KRKRMKMDKTCSKTKNKSKHALRKKQLK).

Belongs to the XLR/SYCP3 family. Expressed in testis and ovary (at protein level).

It localises to the nucleus. The protein resides in the cytoplasm. The protein localises to the chromosome. Functionally, may play a role in meiosis. The protein is Protein FAM9B of Homo sapiens (Human).